The sequence spans 367 residues: Peptide chain release factor 2 (367 aa).

At glutamine 250 the chain carries N5-methylglutamine.

Belongs to the prokaryotic/mitochondrial release factor family. In terms of processing, methylated by PrmC. Methylation increases the termination efficiency of RF2.

The protein localises to the cytoplasm. In terms of biological role, peptide chain release factor 2 directs the termination of translation in response to the peptide chain termination codons UGA and UAA. This chain is Peptide chain release factor 2, found in Mycobacteroides abscessus (strain ATCC 19977 / DSM 44196 / CCUG 20993 / CIP 104536 / JCM 13569 / NCTC 13031 / TMC 1543 / L948) (Mycobacterium abscessus).